We begin with the raw amino-acid sequence, 460 residues long: MTWSILRYLRENPDILKDSMRKRGLDPSVIDEAKRVDEEWRKLKRQVDEIRHRHNVITRQIASARDPEERRKLIEEARRLLAEREELEKKLKALEEERERILLSLPNIVHDSVPVGFSDEENVPIRFWGRPRVYRGHLDAFKAQTERWGFKVDYELIDWKPVGHADMLEYVLKLGNTMKAAEVAGSRFYYLFDDIVWLDFALLLYAIDRLTQKGYRLVLPPYMIRHKILMGVIDMETFKDAIYKVEDEDLYLIATAEHPLAGLYYNEEIMEDELPIKLVGISPCFRKEAGAGNRDLKGIFRVHQFHKVEQFVYAKPEESWDILEELIRNAEELFQGLGLPYRVVNVVSGELGAPAAKKYDLEVWMPAQGKYREMVSASNTTDWQSYRLNIRLVRKKDMKREYVHTLNSTAIASTRTITAILENFQEPDGTVVIPKVLRKYLEIFPKAPKDAIHPVKKVRG.

Position 255 to 257 (255 to 257) interacts with L-serine; sequence TAE. Residues 286 to 288 and V302 each bind ATP; that span reads RKE. Residue E309 coordinates L-serine. Residue 373–376 coordinates ATP; the sequence is EMVS. Residue T409 participates in L-serine binding.

It belongs to the class-II aminoacyl-tRNA synthetase family. Type-1 seryl-tRNA synthetase subfamily. In terms of assembly, homodimer. The tRNA molecule binds across the dimer.

It localises to the cytoplasm. It catalyses the reaction tRNA(Ser) + L-serine + ATP = L-seryl-tRNA(Ser) + AMP + diphosphate + H(+). The catalysed reaction is tRNA(Sec) + L-serine + ATP = L-seryl-tRNA(Sec) + AMP + diphosphate + H(+). The protein operates within aminoacyl-tRNA biosynthesis; selenocysteinyl-tRNA(Sec) biosynthesis; L-seryl-tRNA(Sec) from L-serine and tRNA(Sec): step 1/1. Catalyzes the attachment of serine to tRNA(Ser). Is also able to aminoacylate tRNA(Sec) with serine, to form the misacylated tRNA L-seryl-tRNA(Sec), which will be further converted into selenocysteinyl-tRNA(Sec). This is Serine--tRNA ligase from Hyperthermus butylicus (strain DSM 5456 / JCM 9403 / PLM1-5).